The following is a 132-amino-acid chain: Agouti-signaling protein (132 aa).

The N-terminal stretch at 1-22 is a signal peptide; that stretch reads MDVTRLLLATLLVFLCFFTAYS. The N-linked (GlcNAc...) asparagine glycan is linked to Asn-39. The interval 58 to 88 is disordered; the sequence is KSKQMSRKEAEKKRSSKKEASMKKVARPRTP. A compositionally biased stretch (basic and acidic residues) spans 63–79; it reads SRKEAEKKRSSKKEASM. 5 cysteine pairs are disulfide-bonded: Cys-93-Cys-108, Cys-100-Cys-114, Cys-107-Cys-125, Cys-111-Cys-132, and Cys-116-Cys-123. An Agouti domain is found at 93 to 132; sequence CVATRDSCKPPAPACCDPCASCQCRFFRSACSCRVLSLNC.

The protein localises to the secreted. In terms of biological role, involved in the regulation of melanogenesis. The binding of ASP to MC1R precludes alpha-MSH initiated signaling and thus blocks production of cAMP, leading to a down-regulation of eumelanogenesis (brown/black pigment) and thus increasing synthesis of pheomelanin (yellow/red pigment). This chain is Agouti-signaling protein (ASIP), found in Cercopithecus mitis (Blue monkey).